The sequence spans 233 residues: Nickel import system ATP-binding protein NikE (233 aa).

The ABC transporter domain maps to 2 to 228 (IELKHVTFGY…DRHPYTKELV (227 aa)). Residue 35-42 (GESGCGKS) participates in ATP binding.

This sequence belongs to the ABC transporter superfamily. The complex is composed of two ATP-binding proteins (NikD and NikE), two transmembrane proteins (NikB and NikC) and a solute-binding protein (NikA).

Its subcellular location is the cell membrane. It catalyses the reaction Ni(2+)(out) + ATP + H2O = Ni(2+)(in) + ADP + phosphate + H(+). In terms of biological role, part of the ABC transporter complex NikABCDE (Opp2) involved in nickel import. Probably responsible for energy coupling to the transport system. This Staphylococcus aureus (strain MSSA476) protein is Nickel import system ATP-binding protein NikE.